Reading from the N-terminus, the 357-residue chain is Tetraacyldisaccharide 4'-kinase (357 aa).

ATP is bound at residue 67-74 (SVGGTGKT).

This sequence belongs to the LpxK family.

The enzyme catalyses a lipid A disaccharide + ATP = a lipid IVA + ADP + H(+). Its pathway is glycolipid biosynthesis; lipid IV(A) biosynthesis; lipid IV(A) from (3R)-3-hydroxytetradecanoyl-[acyl-carrier-protein] and UDP-N-acetyl-alpha-D-glucosamine: step 6/6. Its function is as follows. Transfers the gamma-phosphate of ATP to the 4'-position of a tetraacyldisaccharide 1-phosphate intermediate (termed DS-1-P) to form tetraacyldisaccharide 1,4'-bis-phosphate (lipid IVA). The chain is Tetraacyldisaccharide 4'-kinase from Syntrophotalea carbinolica (strain DSM 2380 / NBRC 103641 / GraBd1) (Pelobacter carbinolicus).